Reading from the N-terminus, the 155-residue chain is MSQVILDLQLACEDNSGLPEESQFQTWLNAVIPQFQEESEVTILVVDTAESHSLNLTYRGKDKPTNVLSFPFEVPPGMEMSLLGDLVICRQVVEKEAQEQGKPLEAHWAHMVVHGSLHLLGYDHIEDDEAEEMEALETEIMLALGYEDPYIAEKE.

Residues histidine 114, histidine 118, and histidine 124 each coordinate Zn(2+).

The protein belongs to the endoribonuclease YbeY family. It depends on Zn(2+) as a cofactor.

Its subcellular location is the cytoplasm. Its function is as follows. Single strand-specific metallo-endoribonuclease involved in late-stage 70S ribosome quality control and in maturation of the 3' terminus of the 16S rRNA. This Shigella dysenteriae serotype 1 (strain Sd197) protein is Endoribonuclease YbeY.